A 471-amino-acid polypeptide reads, in one-letter code: Tigger transposable element-derived protein 3 (471 aa).

In terms of domain architecture, HTH psq-type spans 3-55; that stretch reads LSSKKKLHALSLAEKIQVLELLDESKMSQSEVARRFQVSQPQISRICKNKEKL. 2 consecutive DNA-binding regions (H-T-H motif) follow at residues 31–51 and 100–130; these read QSEV…ICKN and PMLL…WKRR. The HTH CENPB-type domain occupies 67-137; that stretch reads ERKRKRESKY…KRRNNVGFGA (71 aa). Positions 167-360 constitute a DDE-1 domain; sequence FSPEDVFGCA…VPPQLIFSSF (194 aa).

The protein belongs to the tigger transposable element derived protein family.

It is found in the nucleus. In Homo sapiens (Human), this protein is Tigger transposable element-derived protein 3 (TIGD3).